Consider the following 213-residue polypeptide: Probable nicotinate-nucleotide adenylyltransferase (213 aa).

This sequence belongs to the NadD family.

It carries out the reaction nicotinate beta-D-ribonucleotide + ATP + H(+) = deamido-NAD(+) + diphosphate. It functions in the pathway cofactor biosynthesis; NAD(+) biosynthesis; deamido-NAD(+) from nicotinate D-ribonucleotide: step 1/1. Functionally, catalyzes the reversible adenylation of nicotinate mononucleotide (NaMN) to nicotinic acid adenine dinucleotide (NaAD). This is Probable nicotinate-nucleotide adenylyltransferase from Citrobacter koseri (strain ATCC BAA-895 / CDC 4225-83 / SGSC4696).